The sequence spans 33 residues: Cytochrome b6-f complex subunit 8 (33 aa).

A helical transmembrane segment spans residues 2–22 (LFTFAWASLAAIFTFSIAMVV).

Belongs to the PetN family. As to quaternary structure, the 4 large subunits of the cytochrome b6-f complex are cytochrome b6, subunit IV (17 kDa polypeptide, PetD), cytochrome f and the Rieske protein, while the 4 small subunits are PetG, PetL, PetM and PetN. The complex functions as a dimer.

It is found in the cellular thylakoid membrane. In terms of biological role, component of the cytochrome b6-f complex, which mediates electron transfer between photosystem II (PSII) and photosystem I (PSI), cyclic electron flow around PSI, and state transitions. In Prochlorococcus marinus (strain MIT 9211), this protein is Cytochrome b6-f complex subunit 8.